Consider the following 379-residue polypeptide: Chaperone protein DnaJ (379 aa).

The J domain occupies 4–69; that stretch reads DLYETLGVQK…QKRAAYDRYG (66 aa). The CR-type zinc finger occupies 137-215; that stretch reads GKTAQIRVPT…CHGQGRVVEE (79 aa). The Zn(2+) site is built by C150, C153, C167, C170, C189, C192, C203, and C206. CXXCXGXG motif repeat units follow at residues 150 to 157, 167 to 174, 189 to 196, and 203 to 210; these read CDVCTGTG, CGTCQGTG, CPTCGGRG, and CTKCHGQG.

The protein belongs to the DnaJ family. Homodimer. Zn(2+) serves as cofactor.

The protein resides in the cytoplasm. Its function is as follows. Participates actively in the response to hyperosmotic and heat shock by preventing the aggregation of stress-denatured proteins and by disaggregating proteins, also in an autonomous, DnaK-independent fashion. Unfolded proteins bind initially to DnaJ; upon interaction with the DnaJ-bound protein, DnaK hydrolyzes its bound ATP, resulting in the formation of a stable complex. GrpE releases ADP from DnaK; ATP binding to DnaK triggers the release of the substrate protein, thus completing the reaction cycle. Several rounds of ATP-dependent interactions between DnaJ, DnaK and GrpE are required for fully efficient folding. Also involved, together with DnaK and GrpE, in the DNA replication of plasmids through activation of initiation proteins. This is Chaperone protein DnaJ from Rhizobium meliloti (strain 1021) (Ensifer meliloti).